The following is a 384-amino-acid chain: tRNA-specific 2-thiouridylase MnmA (384 aa).

Residues 9–16 (GMSGGVDS) and M35 each bind ATP. Residues 95–97 (NPD) are interaction with target base in tRNA. The Nucleophile role is filled by C100. A disulfide bridge connects residues C100 and C196. G124 provides a ligand contact to ATP. The interval 146 to 148 (KDQ) is interaction with tRNA. Catalysis depends on C196, which acts as the Cysteine persulfide intermediate. An interaction with tRNA region spans residues 308 to 309 (RY).

The protein belongs to the MnmA/TRMU family.

The protein resides in the cytoplasm. It catalyses the reaction S-sulfanyl-L-cysteinyl-[protein] + uridine(34) in tRNA + AH2 + ATP = 2-thiouridine(34) in tRNA + L-cysteinyl-[protein] + A + AMP + diphosphate + H(+). In terms of biological role, catalyzes the 2-thiolation of uridine at the wobble position (U34) of tRNA, leading to the formation of s(2)U34. The protein is tRNA-specific 2-thiouridylase MnmA of Burkholderia ambifaria (strain ATCC BAA-244 / DSM 16087 / CCUG 44356 / LMG 19182 / AMMD) (Burkholderia cepacia (strain AMMD)).